The following is a 341-amino-acid chain: G2/mitotic-specific cyclin C13-1 (341 aa).

This sequence belongs to the cyclin family. Cyclin AB subfamily.

In terms of biological role, essential for the control of the cell cycle at the G2/M (mitosis) transition. Interacts with the CDC2 and CDK2 protein kinases to form MPF. G2/M cyclins accumulate steadily during G2 and are abruptly destroyed at mitosis. The sequence is that of G2/mitotic-specific cyclin C13-1 from Daucus carota (Wild carrot).